Reading from the N-terminus, the 621-residue chain is tRNA uridine 5-carboxymethylaminomethyl modification enzyme MnmG (621 aa).

17-22 (GGGHAG) contributes to the FAD binding site. An NAD(+)-binding site is contributed by 276–290 (GPRYCPSIEDKIMKF).

This sequence belongs to the MnmG family. Homodimer. Heterotetramer of two MnmE and two MnmG subunits. The cofactor is FAD.

It is found in the cytoplasm. Its function is as follows. NAD-binding protein involved in the addition of a carboxymethylaminomethyl (cmnm) group at the wobble position (U34) of certain tRNAs, forming tRNA-cmnm(5)s(2)U34. This is tRNA uridine 5-carboxymethylaminomethyl modification enzyme MnmG from Zymomonas mobilis subsp. mobilis (strain ATCC 31821 / ZM4 / CP4).